Reading from the N-terminus, the 989-residue chain is Cation-chloride cotransporter 1 (989 aa).

The segment covering 1 to 10 (MENGEIEGAA) has biased composition (acidic residues). The tract at residues 1–29 (MENGEIEGAADDGVPVPAPPNGRRYRPVG) is disordered. Residues 1-132 (MENGEIEGAA…GRPKETGPKF (132 aa)) are Cytoplasmic-facing. Residues 133–153 (GTMMGVFVPCLQNILGIIYYI) form a helical membrane-spanning segment. Over 154 to 167 (RFTWIVGMAGVWQS) the chain is Extracellular. The helical transmembrane segment at 168-188 (LVLVSFCGACTFLTGISLSAI) threads the bilayer. Residues 189 to 214 (ATNGAMKGGGPYYLIGRALGPEVGVS) are Cytoplasmic-facing. Residues 215-235 (IGLCFFLGNAVAGSMYVLGAV) form a helical membrane-spanning segment. Residues 236–280 (ETFLDAVPSAGFFKESVTVVNNTLVNGTATASTATISTPSLHDLQ) are Extracellular-facing. Asn-256 and Asn-261 each carry an N-linked (GlcNAc...) asparagine glycan. The helical transmembrane segment at 281–301 (VYGVIVTILLCFIVFGGVKII) threads the bilayer. The Cytoplasmic segment spans residues 302 to 304 (NKV). The chain crosses the membrane as a helical span at residues 305 to 325 (APAFLIPVLFSLLCIYLGVFI). Residues 326 to 365 (APRHNAPKGITGLSITTFKDNWGSEYQRTNNAGVPDPNGS) are Extracellular-facing. Asn-363 is a glycosylation site (N-linked (GlcNAc...) asparagine). A helical membrane pass occupies residues 366-386 (IYWDFNALVGLFFPAVTGIMA). Topologically, residues 387-405 (GSNRSASLKDTQRSIPIGT) are cytoplasmic. A helical transmembrane segment spans residues 406–426 (LSATLTTTAMYLFSVLLFGAL). Residues 427 to 441 (ATREELLTDRLLTAT) lie on the Extracellular side of the membrane. The chain crosses the membrane as a helical span at residues 442–462 (VAWPAPAVIYIGIILSTLGAA). Over 463–498 (LQSLTGAPRLLAAIANDDILPVLNYFKVSEGAEPHS) the chain is Cytoplasmic. Residues 499-519 (ATLFTAFICICCVVIGNLDLI) traverse the membrane as a helical segment. Residues 520 to 522 (TPT) are Extracellular-facing. A helical membrane pass occupies residues 523–543 (ITMFFLLCYAGVNLSCFLLDL). Topologically, residues 544-551 (LDAPSWRP) are cytoplasmic. Residues 552-572 (RWKFHHWSLSLVGALLCVVIM) form a helical membrane-spanning segment. Residues 573-578 (FLISWS) are Extracellular-facing. Residues 579-599 (FTVVSLALASLIYYYVSLKGK) form a helical membrane-spanning segment. Topologically, residues 600-989 (AGDWGDGFKS…YRRDVVTFFT (390 aa)) are cytoplasmic.

This sequence belongs to the SLC12A transporter family. Expressed in roots, stems and leaves with higher expression in root and leaf tips.

Its subcellular location is the membrane. Functionally, probable cation/chloride cotransporter that may mediate potassium-chloride cotransport. Involved in plant development and K(+) and Cl(-) homeostasis. May not be involved in sodium-chloride cotransport. In Oryza sativa subsp. japonica (Rice), this protein is Cation-chloride cotransporter 1 (CCC1).